A 302-amino-acid chain; its full sequence is Nitrophorin Cim l NP (302 aa).

A signal peptide spans Met1–Ala20. Position 80 (Cys80) interacts with heme.

Heme b serves as cofactor. Post-translationally, the N-terminus is blocked. As to expression, expressed in salivary glands.

It localises to the secreted. In terms of biological role, heme-based protein that delivers nitric oxide gas (NO) to the victim while feeding, resulting in vasodilation. In place of heme, the heme-binding cysteine can also reversibly bind NO when it is present in high concentrations. The sequence is that of Nitrophorin Cim l NP from Cimex lectularius (Bed bug).